We begin with the raw amino-acid sequence, 504 residues long: Glycerol kinase (504 aa).

Thr12 lines the ADP pocket. Positions 12, 13, and 14 each coordinate ATP. Residue Thr12 coordinates sn-glycerol 3-phosphate. Arg16 is an ADP binding site. Arg82, Glu83, Tyr134, and Asp246 together coordinate sn-glycerol 3-phosphate. Glycerol is bound by residues Arg82, Glu83, Tyr134, Asp246, and Gln247. ADP contacts are provided by Thr268 and Gly312. Positions 268, 312, 316, and 413 each coordinate ATP. Residues Gly413 and Asn417 each coordinate ADP.

Belongs to the FGGY kinase family.

The enzyme catalyses glycerol + ATP = sn-glycerol 3-phosphate + ADP + H(+). It participates in polyol metabolism; glycerol degradation via glycerol kinase pathway; sn-glycerol 3-phosphate from glycerol: step 1/1. Its activity is regulated as follows. Inhibited by fructose 1,6-bisphosphate (FBP). Key enzyme in the regulation of glycerol uptake and metabolism. Catalyzes the phosphorylation of glycerol to yield sn-glycerol 3-phosphate. The protein is Glycerol kinase of Renibacterium salmoninarum (strain ATCC 33209 / DSM 20767 / JCM 11484 / NBRC 15589 / NCIMB 2235).